Here is a 144-residue protein sequence, read N- to C-terminus: Small polypeptide DEVIL 18 (144 aa).

A compositionally biased stretch (low complexity) spans S30–S58. The tract at residues S30–D89 is disordered. A helical transmembrane segment spans residues P42–S58. Residues A68–T84 are compositionally biased toward polar residues. The required for DVL/RTFL small polypeptide activity stretch occupies residues S108–K139.

The protein belongs to the DVL/RTFL small polypeptides family.

The protein localises to the cell membrane. Its function is as follows. Small polypeptide acting as a regulatory molecule which coordinates cellular responses required for differentiation, growth and development, probably by restricting polar cell proliferation in lateral organs and coordinating socket cell recruitment and differentiation at trichome sites. The chain is Small polypeptide DEVIL 18 from Arabidopsis thaliana (Mouse-ear cress).